The chain runs to 141 residues: Hemoglobin subunit alpha-A/A' (141 aa).

Residues 1-141 (VLSANDKTNV…VGNVLTAKYR (141 aa)) enclose the Globin domain. H58 serves as a coordination point for O2. H87 is a binding site for heme b.

Belongs to the globin family. In terms of assembly, heterotetramer of two alpha chains and two beta chains. Red blood cells.

In terms of biological role, involved in oxygen transport from the lung to the various peripheral tissues. In Gyps rueppelli (Rueppell's griffon), this protein is Hemoglobin subunit alpha-A/A' (HBAA).